The primary structure comprises 282 residues: Pantothenate synthetase (282 aa).

30–37 (MGYLHEGH) serves as a coordination point for ATP. Catalysis depends on histidine 37, which acts as the Proton donor. Position 61 (glutamine 61) interacts with (R)-pantoate. Beta-alanine is bound at residue glutamine 61. Residue 147 to 150 (GMKD) participates in ATP binding. Glutamine 153 is a (R)-pantoate binding site. ATP is bound by residues valine 176 and 184-187 (KSSR).

This sequence belongs to the pantothenate synthetase family. As to quaternary structure, homodimer.

The protein localises to the cytoplasm. The enzyme catalyses (R)-pantoate + beta-alanine + ATP = (R)-pantothenate + AMP + diphosphate + H(+). It functions in the pathway cofactor biosynthesis; (R)-pantothenate biosynthesis; (R)-pantothenate from (R)-pantoate and beta-alanine: step 1/1. Functionally, catalyzes the condensation of pantoate with beta-alanine in an ATP-dependent reaction via a pantoyl-adenylate intermediate. The chain is Pantothenate synthetase from Bacillus cereus (strain ATCC 14579 / DSM 31 / CCUG 7414 / JCM 2152 / NBRC 15305 / NCIMB 9373 / NCTC 2599 / NRRL B-3711).